Consider the following 335-residue polypeptide: Pyridoxal 5'-phosphate synthase subunit PdxS (335 aa).

A D-ribose 5-phosphate-binding site is contributed by Asp-30. Catalysis depends on Lys-87, which acts as the Schiff-base intermediate with D-ribose 5-phosphate. Gly-159 lines the D-ribose 5-phosphate pocket. Arg-171 contributes to the D-glyceraldehyde 3-phosphate binding site. D-ribose 5-phosphate-binding positions include Gly-257 and 278-279; that span reads GS.

The protein belongs to the PdxS/SNZ family. In the presence of PdxT, forms a dodecamer of heterodimers.

It catalyses the reaction aldehydo-D-ribose 5-phosphate + D-glyceraldehyde 3-phosphate + L-glutamine = pyridoxal 5'-phosphate + L-glutamate + phosphate + 3 H2O + H(+). Its pathway is cofactor biosynthesis; pyridoxal 5'-phosphate biosynthesis. Catalyzes the formation of pyridoxal 5'-phosphate from ribose 5-phosphate (RBP), glyceraldehyde 3-phosphate (G3P) and ammonia. The ammonia is provided by the PdxT subunit. Can also use ribulose 5-phosphate and dihydroxyacetone phosphate as substrates, resulting from enzyme-catalyzed isomerization of RBP and G3P, respectively. The polypeptide is Pyridoxal 5'-phosphate synthase subunit PdxS (Pyrococcus furiosus (strain ATCC 43587 / DSM 3638 / JCM 8422 / Vc1)).